We begin with the raw amino-acid sequence, 231 residues long: Ubiquinone biosynthesis protein coq-4, mitochondrial (231 aa).

Residues His-133, Asp-134, His-137, and Glu-149 each coordinate Zn(2+).

It belongs to the COQ4 family. As to quaternary structure, component of a multi-subunit COQ enzyme complex. The cofactor is Zn(2+).

The protein resides in the mitochondrion inner membrane. It catalyses the reaction a 4-hydroxy-3-methoxy-5-(all-trans-polyprenyl)benzoate + H(+) = a 2-methoxy-6-(all-trans-polyprenyl)phenol + CO2. It participates in cofactor biosynthesis; ubiquinone biosynthesis. Functionally, lyase that catalyzes the C1-decarboxylation of 4-hydroxy-3-methoxy-5-(all-trans-polyprenyl)benzoic acid into 2-methoxy-6-(all-trans-polyprenyl)phenol during ubiquinone biosynthesis. This chain is Ubiquinone biosynthesis protein coq-4, mitochondrial, found in Caenorhabditis elegans.